The sequence spans 110 residues: Large ribosomal subunit protein uL22 (110 aa).

The protein belongs to the universal ribosomal protein uL22 family. Part of the 50S ribosomal subunit.

This protein binds specifically to 23S rRNA; its binding is stimulated by other ribosomal proteins, e.g. L4, L17, and L20. It is important during the early stages of 50S assembly. It makes multiple contacts with different domains of the 23S rRNA in the assembled 50S subunit and ribosome. Its function is as follows. The globular domain of the protein is located near the polypeptide exit tunnel on the outside of the subunit, while an extended beta-hairpin is found that lines the wall of the exit tunnel in the center of the 70S ribosome. This chain is Large ribosomal subunit protein uL22, found in Buchnera aphidicola subsp. Schizaphis graminum (strain Sg).